We begin with the raw amino-acid sequence, 441 residues long: NADH-quinone oxidoreductase subunit D 1 (441 aa).

It belongs to the complex I 49 kDa subunit family. NDH-1 is composed of 14 different subunits. Subunits NuoB, C, D, E, F, and G constitute the peripheral sector of the complex.

It localises to the cell membrane. It carries out the reaction a quinone + NADH + 5 H(+)(in) = a quinol + NAD(+) + 4 H(+)(out). Functionally, NDH-1 shuttles electrons from NADH, via FMN and iron-sulfur (Fe-S) centers, to quinones in the respiratory chain. The immediate electron acceptor for the enzyme in this species is believed to be a menaquinone. Couples the redox reaction to proton translocation (for every two electrons transferred, four hydrogen ions are translocated across the cytoplasmic membrane), and thus conserves the redox energy in a proton gradient. The sequence is that of NADH-quinone oxidoreductase subunit D 1 from Salinispora tropica (strain ATCC BAA-916 / DSM 44818 / JCM 13857 / NBRC 105044 / CNB-440).